The sequence spans 84 residues: U1-hexatoxin-Iw1a (84 aa).

Positions 1-18 are cleaved as a signal peptide; that stretch reads MLKFVVVICLVIMAITFA. Cystine bridges form between Cys21/Cys32, Cys26/Cys40, Cys31/Cys66, Cys50/Cys74, and Cys68/Cys81.

The protein belongs to the MIT-like AcTx family. Expressed by the venom gland.

It is found in the secreted. The sequence is that of U1-hexatoxin-Iw1a from Illawarra wisharti (Illawarra funnel-web spider).